The primary structure comprises 129 residues: Omega-scoloptoxin(05)-Ssm1a (129 aa).

The signal sequence occupies residues Met-1–Thr-24. The propeptide occupies Leu-25 to Ala-46.

It belongs to the scoloptoxin-05 family. In terms of processing, contains 3 disulfide bonds. Expressed by the venom gland.

The protein resides in the secreted. Functionally, toxin that increase voltage-gated calcium channel (Cav) currents in DRG neurons by 70% and 120%, when 1 uM and 10 uM are tested, respectively. The sequence is that of Omega-scoloptoxin(05)-Ssm1a from Scolopendra mutilans (Chinese red-headed centipede).